Reading from the N-terminus, the 593-residue chain is ABC transporter F family member 2 (593 aa).

The segment covering 1–10 (MAKKGGKNNK) has biased composition (basic residues). Positions 1-25 (MAKKGGKNNKSKKEVTPPTSDVEDE) are disordered. ABC transporter domains are found at residues 53–294 (VKIE…VNQM) and 364–583 (MHFD…RDLT). ATP contacts are provided by residues 85–92 (GQNGCGKS) and 399–406 (GPNGAGKS).

This sequence belongs to the ABC transporter superfamily. ABCF family. EF3 subfamily.

The protein is ABC transporter F family member 2 (abcF2) of Dictyostelium discoideum (Social amoeba).